We begin with the raw amino-acid sequence, 490 residues long: Cytochrome P450 2C39 (490 aa).

The first 25 residues, 1 to 25, serve as a signal peptide directing secretion; it reads MDLVTFLVLTLSSLILLSLWRQSCG. Heme is bound at residue cysteine 435.

The protein belongs to the cytochrome P450 family. Heme serves as cofactor. As to expression, liver.

The protein resides in the endoplasmic reticulum membrane. It is found in the microsome membrane. The enzyme catalyses an organic molecule + reduced [NADPH--hemoprotein reductase] + O2 = an alcohol + oxidized [NADPH--hemoprotein reductase] + H2O + H(+). The catalysed reaction is (5Z,8Z,11Z,14Z)-eicosatetraenoate + reduced [NADPH--hemoprotein reductase] + O2 = 11,12-epoxy-(5Z,8Z,14Z)-eicosatrienoate + oxidized [NADPH--hemoprotein reductase] + H2O + H(+). It catalyses the reaction (5Z,8Z,11Z,14Z)-eicosatetraenoate + reduced [NADPH--hemoprotein reductase] + O2 = 14,15-epoxy-(5Z,8Z,11Z)-eicosatrienoate + oxidized [NADPH--hemoprotein reductase] + H2O + H(+). It functions in the pathway lipid metabolism; arachidonate metabolism. Its function is as follows. A cytochrome P450 monooxygenase that primarily catalyzes the epoxidation of 11,12 and 14,15 double bonds of (5Z,8Z,11Z,14Z)-eicosatetraenoic acid (arachidonate) forming 11,12- and 14,15-epoxyeicosatrienoic acids (11,12- and 14,15-EET) regioisomers. Mechanistically, uses molecular oxygen inserting one oxygen atom into a substrate, and reducing the second into a water molecule, with two electrons provided by NADPH via cytochrome P450 reductase (CPR; NADPH--hemoprotein reductase). This chain is Cytochrome P450 2C39, found in Mus musculus (Mouse).